Here is a 417-residue protein sequence, read N- to C-terminus: MIRSFIRSSALLLALLPVTGYSAGPLILVGGGLKDDNTAIYQRLIQLAGGNGQARIGVITAASIPESDDPDAGTADAANSKANGEFYAQLLETYGAADAQWIPIDLDQISNNSNPQVVAQINSMTGFFFGGGDQSRLTQTLQTATRADSPALAAIRARHNAGAVLAGTSAGTAIMVQGPMVTGGESYDGLRYGVYTTPSGDDLSYDMQGGFGFFNYGLLDTHFSERGRQGRIVRLADHTQVPFAFGVDENTALLVQNNATLGQVEMEVIGENGVFIFDLRNKERGTGSTYALYDVLGSYLTAGDRYRPVTGQFVIASGKTSLRGRERYSAAMTVTTDIFSSPNNSGANGRRKPREFVKVSADLFDSRVTSTLGRTYETNPLSRRSVQKHAVRQPWLPGHRWRQEHAVLPAFADGFPS.

Residues 1–23 form the signal peptide; it reads MIRSFIRSSALLLALLPVTGYSA. Catalysis depends on charge relay system residues Ser-169, Asp-188, and His-222.

This sequence belongs to the peptidase S51 family.

The protein resides in the secreted. The catalysed reaction is [L-4-(L-arginin-2-N-yl)aspartate](n) + H2O = [L-4-(L-arginin-2-N-yl)aspartate](n-1) + L-4-(L-arginin-2-N-yl)aspartate. Inhibited by serine protease inhibitors. Inhibited by N-Bromo-succinimide. Functionally, exopeptidase that catalyzes the hydrolytic cleavage of multi-L-arginyl-poly-L-aspartic acid (cyanophycin; a water-insoluble reserve polymer) into aspartate-arginine dipeptides. This is Cyanophycinase (cphE) from Pseudomonas anguilliseptica.